Reading from the N-terminus, the 288-residue chain is Pantothenate synthetase (288 aa).

An ATP-binding site is contributed by 31 to 38 (MGNLHRGH). The active-site Proton donor is His-38. Gln-62 is a binding site for (R)-pantoate. Gln-62 contacts beta-alanine. 150–153 (GQKD) is an ATP binding site. Gln-156 serves as a coordination point for (R)-pantoate. Residues Ile-179 and 187–190 (LSSR) contribute to the ATP site.

It belongs to the pantothenate synthetase family. Homodimer.

It localises to the cytoplasm. It catalyses the reaction (R)-pantoate + beta-alanine + ATP = (R)-pantothenate + AMP + diphosphate + H(+). It participates in cofactor biosynthesis; (R)-pantothenate biosynthesis; (R)-pantothenate from (R)-pantoate and beta-alanine: step 1/1. Catalyzes the condensation of pantoate with beta-alanine in an ATP-dependent reaction via a pantoyl-adenylate intermediate. In Wigglesworthia glossinidia brevipalpis, this protein is Pantothenate synthetase.